The primary structure comprises 245 residues: Adapter protein MecA (245 aa).

The protein belongs to the MecA family. As to quaternary structure, homodimer.

In terms of biological role, enables the recognition and targeting of unfolded and aggregated proteins to the ClpC protease or to other proteins involved in proteolysis. The sequence is that of Adapter protein MecA from Streptococcus pneumoniae serotype 4 (strain ATCC BAA-334 / TIGR4).